A 507-amino-acid chain; its full sequence is Probable Xaa-Pro aminopeptidase HCBG_01484 (507 aa).

Mn(2+) contacts are provided by D283, D294, E431, and E469.

Belongs to the peptidase M24B family. Mn(2+) serves as cofactor.

The catalysed reaction is Release of any N-terminal amino acid, including proline, that is linked to proline, even from a dipeptide or tripeptide.. Catalyzes the removal of a penultimate prolyl residue from the N-termini of peptides. The chain is Probable Xaa-Pro aminopeptidase HCBG_01484 from Ajellomyces capsulatus (strain G186AR / H82 / ATCC MYA-2454 / RMSCC 2432) (Darling's disease fungus).